The sequence spans 376 residues: Aminomethyltransferase (376 aa).

It belongs to the GcvT family. The glycine cleavage system is composed of four proteins: P, T, L and H.

The catalysed reaction is N(6)-[(R)-S(8)-aminomethyldihydrolipoyl]-L-lysyl-[protein] + (6S)-5,6,7,8-tetrahydrofolate = N(6)-[(R)-dihydrolipoyl]-L-lysyl-[protein] + (6R)-5,10-methylene-5,6,7,8-tetrahydrofolate + NH4(+). In terms of biological role, the glycine cleavage system catalyzes the degradation of glycine. The protein is Aminomethyltransferase of Nostoc sp. (strain PCC 7120 / SAG 25.82 / UTEX 2576).